The primary structure comprises 1033 residues: Tyrosine-protein kinase-like otk (1033 aa).

Residues Met-1–Ala-22 form the signal peptide. Residues Ser-23 to Ala-581 lie on the Extracellular side of the membrane. 5 Ig-like C2-type domains span residues Ser-25–Ser-114, Leu-113–Ser-199, Pro-251–Asn-365, Pro-368–Asn-463, and Pro-468–Val-558. N-linked (GlcNAc...) asparagine glycosylation occurs at Asn-39. Intrachain disulfides connect Cys-46–Cys-95, Cys-137–Cys-188, Cys-276–Cys-354, and Cys-399–Cys-447. 7 N-linked (GlcNAc...) asparagine glycosylation sites follow: Asn-336, Asn-417, Asn-429, Asn-444, Asn-457, Asn-512, and Asn-524. An intrachain disulfide couples Cys-490 to Cys-542. A helical membrane pass occupies residues Val-582–Trp-602. At Cys-603–Lys-1033 the chain is on the cytoplasmic side. 2 disordered regions span residues Leu-617–Ala-679 and Ser-718–Met-760. Over residues Lys-655–Arg-673 the composition is skewed to polar residues. Ser-678 carries the post-translational modification Phosphoserine. The Protein kinase; inactive domain maps to Leu-692 to Met-1028. Residues Ser-720–Ser-731 are compositionally biased toward basic and acidic residues.

This sequence belongs to the protein kinase superfamily. Tyr protein kinase family. Insulin receptor subfamily. In terms of assembly, interacts with plexA; component of a receptor complex that mediates the repulsive signaling in response to Semaphorin ligands. Dynamically expressed during embryogenesis in several areas of the developing nervous system, including neurons and fasciculating axons. Expression in stage 7 embryos is seen in the anterior midgut primordia, cephalic furrow and along the germinal band. At stage 11, expression is in 15 stripes over the trunk region, and in the anterior and posterior midgut primordia. Stage 12 shows expression in the developing nervous system, procephalic lobe and maxillar bud. Stage 13 shows expression in the ventral cord, maxillar segment and in three regions of the gut. At stage 16 expression is preferentially detected throughout the nervous system, including the neuromers in the ventral cord and the supraesophageal ganglion (at protein level). In larva, expression is seen in developing R cells and is localized predominantly to R1-R6 growth cones.

The protein localises to the cell membrane. Acts as a calcium-dependent, homophilic cell adhesion molecule that regulates neural recognition during the development of the nervous system. Component of the repulsive Plexin signaling response to regulate motor axon guidance at the embryonic stage. Also component of a receptor complex that is required in the adult visual system to innervate the lamina layer; specific targeting of R1-R6 axons. The sequence is that of Tyrosine-protein kinase-like otk from Drosophila melanogaster (Fruit fly).